A 188-amino-acid polypeptide reads, in one-letter code: Probable thymidylate kinase (188 aa).

ATP is bound at residue 11–18 (GIDGSGKT).

The protein belongs to the thymidylate kinase family.

It catalyses the reaction dTMP + ATP = dTDP + ADP. The polypeptide is Probable thymidylate kinase (tmk) (Methanocaldococcus jannaschii (strain ATCC 43067 / DSM 2661 / JAL-1 / JCM 10045 / NBRC 100440) (Methanococcus jannaschii)).